Consider the following 557-residue polypeptide: MAAPMLRWGCRGRRWAFARVDGGSCHRRGAPTGSTSNQIRGESSVAQQPLHTAQKTRKGEHKWAAVVGLEIHAQISSNSKLFSGSQVRFSAPPNSLVSFFDASLPGTLPVLNRRCVEAAVMTGLALNCHINKKSLFDRKHYFYADLPAGYQITQQRLPIAVNGSLIYGVCAGKKQSQVIPKTVRIKQIQLEQDSGKSLHDNLRSQTLIDLNRAGVGLLEVVLEPDMSCGEEAATAVRELQLILQALGTSQANMAEGQLRVDANISVHHPGEPLGVRTEVKNLNSIRFLAKAIDYEIQRQINELENGGEILNETRSFHHKLGCTMSMRDKEGKQDYRFMPEPNLPPLVLYDATSLPAGADPQQVINIDQIRETLPELPSVTREKLVQQYGMLLEHSFTLLNEVGLLEFFQNVIKETRAEPKKVTSWVLNTFLGYLKQQNLAVSESPVTPSALAELLDLLDSRTISSSAAKQVFEELWKREGKTPGQIVSEKQLELMQDQGALEQLCHSVMEAHPQVVMDVKNRNPRAINKLIGLVRKATQSRADPVMIKEILEKKLSL.

The transit peptide at 1-41 (MAAPMLRWGCRGRRWAFARVDGGSCHRRGAPTGSTSNQIRG) directs the protein to the mitochondrion. The interval 26–45 (HRRGAPTGSTSNQIRGESSV) is disordered. Residues 32-45 (TGSTSNQIRGESSV) show a composition bias toward polar residues. The residue at position 529 (lysine 529) is an N6-succinyllysine.

This sequence belongs to the GatB/GatE family. GatB subfamily. As to quaternary structure, subunit of the heterotrimeric GatCAB amidotransferase (AdT) complex, composed of A (QRSL1), B (GATB) and C (GATC) subunits. Predominantly expressed in tissues characterized by high rates of oxidative phosphorylation (OxPhos), including muscle and heart.

The protein localises to the mitochondrion. The catalysed reaction is L-glutamyl-tRNA(Gln) + L-glutamine + ATP + H2O = L-glutaminyl-tRNA(Gln) + L-glutamate + ADP + phosphate + H(+). Allows the formation of correctly charged Gln-tRNA(Gln) through the transamidation of misacylated Glu-tRNA(Gln) in the mitochondria. The reaction takes place in the presence of glutamine and ATP through an activated gamma-phospho-Glu-tRNA(Gln). This Homo sapiens (Human) protein is Glutamyl-tRNA(Gln) amidotransferase subunit B, mitochondrial.